We begin with the raw amino-acid sequence, 218 residues long: Glutathione S-transferase Y1 (218 aa).

The GST N-terminal domain occupies 2 to 88 (PMILGYWNVR…YIARKHNLCG (87 aa)). Glutathione is bound by residues 7-8 (YW), 46-50 (WLNEK), 59-60 (NL), and 72-73 (QS). One can recognise a GST C-terminal domain in the interval 90–208 (TEEERIRVDI…KTSRFLRRPI (119 aa)). Tyrosine 116 serves as a coordination point for substrate.

It belongs to the GST superfamily. Mu family. Homodimer.

It localises to the cytoplasm. The catalysed reaction is RX + glutathione = an S-substituted glutathione + a halide anion + H(+). Its function is as follows. Conjugation of reduced glutathione to a wide number of exogenous and endogenous hydrophobic electrophiles. The protein is Glutathione S-transferase Y1 of Cricetulus longicaudatus (Long-tailed dwarf hamster).